The primary structure comprises 447 residues: N-succinylarginine dihydrolase (447 aa).

Substrate-binding positions include Ala19 to Ser28, Asn110, and His137 to Arg138. The active site involves Glu174. Arg212 lines the substrate pocket. His248 is an active-site residue. The substrate site is built by Asp250 and Asn359. The active-site Nucleophile is Cys365.

The protein belongs to the succinylarginine dihydrolase family. As to quaternary structure, homodimer.

The catalysed reaction is N(2)-succinyl-L-arginine + 2 H2O + 2 H(+) = N(2)-succinyl-L-ornithine + 2 NH4(+) + CO2. The protein operates within amino-acid degradation; L-arginine degradation via AST pathway; L-glutamate and succinate from L-arginine: step 2/5. Functionally, catalyzes the hydrolysis of N(2)-succinylarginine into N(2)-succinylornithine, ammonia and CO(2). This chain is N-succinylarginine dihydrolase, found in Escherichia coli (strain ATCC 8739 / DSM 1576 / NBRC 3972 / NCIMB 8545 / WDCM 00012 / Crooks).